A 180-amino-acid polypeptide reads, in one-letter code: MAEERQQRGRDRDRNREEKVDDGMIEKLVAVNRVSKTVKGGRQFTFTALTVVGDGEGKVGFGYGKAREVPVAIQKSMEQARKNLVSVDLNNGTLWHTIKDGHGAARVFMQPASEGTGVIAGGAMRAVLEAVGVKNVLAKATGSRNPINLVRATVKGLSAAQSPARIAAKRGKKVEELNHG.

The region spanning 24–87 (MIEKLVAVNR…EQARKNLVSV (64 aa)) is the S5 DRBM domain.

This sequence belongs to the universal ribosomal protein uS5 family. Part of the 30S ribosomal subunit. Contacts proteins S4 and S8.

Functionally, with S4 and S12 plays an important role in translational accuracy. Located at the back of the 30S subunit body where it stabilizes the conformation of the head with respect to the body. The polypeptide is Small ribosomal subunit protein uS5 (Stenotrophomonas maltophilia (strain R551-3)).